A 322-amino-acid polypeptide reads, in one-letter code: Coelomocyte uptake defective protein 15 (322 aa).

Residues 1–20 (MVNSLSRILFCSLLIFSVIS) form the signal peptide. Residues Asn62, Asn98, Asn144, Asn170, Asn180, Asn183, and Asn222 are each glycosylated (N-linked (GlcNAc...) asparagine). The chain crosses the membrane as a helical span at residues 244–264 (LFGIMITFGTLLLLTALFYAA).

The protein belongs to the OSTM1 family.

It localises to the membrane. In terms of biological role, modulates the transport of substances from the endosomal to lysosomal compartments. Plays a role in lysosome formation and function in coelomocytes. This chain is Coelomocyte uptake defective protein 15, found in Caenorhabditis elegans.